Reading from the N-terminus, the 425-residue chain is Serine--tRNA ligase (425 aa).

The disordered stretch occupies residues 41–70 (TERSQLQARSNQVGKQVGEKIKSGSDPKGT). Positions 44-54 (SQLQARSNQVG) are enriched in polar residues. Over residues 57–70 (VGEKIKSGSDPKGT) the composition is skewed to basic and acidic residues. 234-236 (TSE) contacts L-serine. ATP is bound at residue 265-267 (RRE). Glu-288 serves as a coordination point for L-serine. 352-355 (EISS) serves as a coordination point for ATP. Ser-388 serves as a coordination point for L-serine.

It belongs to the class-II aminoacyl-tRNA synthetase family. Type-1 seryl-tRNA synthetase subfamily. As to quaternary structure, homodimer. The tRNA molecule binds across the dimer.

The protein resides in the cytoplasm. The enzyme catalyses tRNA(Ser) + L-serine + ATP = L-seryl-tRNA(Ser) + AMP + diphosphate + H(+). It catalyses the reaction tRNA(Sec) + L-serine + ATP = L-seryl-tRNA(Sec) + AMP + diphosphate + H(+). Its pathway is aminoacyl-tRNA biosynthesis; selenocysteinyl-tRNA(Sec) biosynthesis; L-seryl-tRNA(Sec) from L-serine and tRNA(Sec): step 1/1. In terms of biological role, catalyzes the attachment of serine to tRNA(Ser). Is also able to aminoacylate tRNA(Sec) with serine, to form the misacylated tRNA L-seryl-tRNA(Sec), which will be further converted into selenocysteinyl-tRNA(Sec). The protein is Serine--tRNA ligase of Trichodesmium erythraeum (strain IMS101).